The primary structure comprises 512 residues: D-alanine--D-alanyl carrier protein ligase (512 aa).

152-153 (TS) serves as a coordination point for ATP. Asp199 is a binding site for D-alanine. 294-299 (NAYGPT) is a binding site for ATP. Residue Val303 coordinates D-alanine. ATP-binding positions include Asp385, 397–400 (YGGR), and Lys499. Residue Lys499 coordinates D-alanine.

Belongs to the ATP-dependent AMP-binding enzyme family. DltA subfamily.

The protein localises to the cytoplasm. The catalysed reaction is holo-[D-alanyl-carrier protein] + D-alanine + ATP = D-alanyl-[D-alanyl-carrier protein] + AMP + diphosphate. It participates in cell wall biogenesis; lipoteichoic acid biosynthesis. Catalyzes the first step in the D-alanylation of lipoteichoic acid (LTA), the activation of D-alanine and its transfer onto the D-alanyl carrier protein (Dcp) DltC. In an ATP-dependent two-step reaction, forms a high energy D-alanyl-AMP intermediate, followed by transfer of the D-alanyl residue as a thiol ester to the phosphopantheinyl prosthetic group of the Dcp. D-alanylation of LTA plays an important role in modulating the properties of the cell wall in Gram-positive bacteria, influencing the net charge of the cell wall. The polypeptide is D-alanine--D-alanyl carrier protein ligase (Streptococcus pyogenes serotype M4 (strain MGAS10750)).